The following is a 456-amino-acid chain: Membrane-bound lytic murein transglycosylase F (456 aa).

The signal sequence occupies residues 1 to 22; it reads MKTWPSRAVSLLLLALALPVGC. Residues 23 to 267 form a non-LT domain region; that stretch reads SEPPPPVRDP…ALDETWFGRF (245 aa). An LT domain region spans residues 268–456; that stretch reads GDYDYVDVAR…YRALLAAQDL (189 aa). Glutamate 314 is an active-site residue.

The protein in the N-terminal section; belongs to the bacterial solute-binding protein 3 family. It in the C-terminal section; belongs to the transglycosylase Slt family.

It is found in the cell outer membrane. It catalyses the reaction Exolytic cleavage of the (1-&gt;4)-beta-glycosidic linkage between N-acetylmuramic acid (MurNAc) and N-acetylglucosamine (GlcNAc) residues in peptidoglycan, from either the reducing or the non-reducing ends of the peptidoglycan chains, with concomitant formation of a 1,6-anhydrobond in the MurNAc residue.. Its function is as follows. Murein-degrading enzyme that degrades murein glycan strands and insoluble, high-molecular weight murein sacculi, with the concomitant formation of a 1,6-anhydromuramoyl product. Lytic transglycosylases (LTs) play an integral role in the metabolism of the peptidoglycan (PG) sacculus. Their lytic action creates space within the PG sacculus to allow for its expansion as well as for the insertion of various structures such as secretion systems and flagella. The protein is Membrane-bound lytic murein transglycosylase F of Maricaulis maris (strain MCS10) (Caulobacter maris).